We begin with the raw amino-acid sequence, 235 residues long: Orotidine 5'-phosphate decarboxylase (235 aa).

Substrate is bound by residues aspartate 12, lysine 34, aspartate 61–threonine 70, threonine 116, arginine 177, glutamine 186, and arginine 207. The active-site Proton donor is lysine 63.

Belongs to the OMP decarboxylase family. Type 1 subfamily. In terms of assembly, homodimer.

The enzyme catalyses orotidine 5'-phosphate + H(+) = UMP + CO2. The protein operates within pyrimidine metabolism; UMP biosynthesis via de novo pathway; UMP from orotate: step 2/2. In terms of biological role, catalyzes the decarboxylation of orotidine 5'-monophosphate (OMP) to uridine 5'-monophosphate (UMP). The polypeptide is Orotidine 5'-phosphate decarboxylase (Agrobacterium fabrum (strain C58 / ATCC 33970) (Agrobacterium tumefaciens (strain C58))).